Here is a 68-residue protein sequence, read N- to C-terminus: Lividin-1 (68 aa).

A signal peptide spans 1-22 (MFTLKKSLLLLFFLGTINLSLC). The propeptide occupies 23–42 (QEERNADEEERRDERNVEVE). A disulfide bridge links Cys-62 with Cys-68.

As to expression, expressed by the skin glands.

The protein resides in the secreted. In terms of biological role, antimicrobial peptide. This chain is Lividin-1, found in Odorrana livida (Green mountain frog).